Reading from the N-terminus, the 88-residue chain is UPF0298 protein BcerKBAB4_3759 (88 aa).

The protein belongs to the UPF0298 family.

It localises to the cytoplasm. This Bacillus mycoides (strain KBAB4) (Bacillus weihenstephanensis) protein is UPF0298 protein BcerKBAB4_3759.